A 502-amino-acid polypeptide reads, in one-letter code: ATP synthase subunit alpha, chloroplastic (502 aa).

170-177 (GDRQTGKS) serves as a coordination point for ATP.

Belongs to the ATPase alpha/beta chains family. F-type ATPases have 2 components, CF(1) - the catalytic core - and CF(0) - the membrane proton channel. CF(1) has five subunits: alpha(3), beta(3), gamma(1), delta(1), epsilon(1). CF(0) has four main subunits: a, b, b' and c.

It is found in the plastid. Its subcellular location is the chloroplast thylakoid membrane. The catalysed reaction is ATP + H2O + 4 H(+)(in) = ADP + phosphate + 5 H(+)(out). Functionally, produces ATP from ADP in the presence of a proton gradient across the membrane. The alpha chain is a regulatory subunit. The protein is ATP synthase subunit alpha, chloroplastic of Guillardia theta (Cryptophyte).